A 276-amino-acid polypeptide reads, in one-letter code: 4-deoxy-L-threo-5-hexosulose-uronate ketol-isomerase 2 (276 aa).

Residues histidine 194, histidine 196, glutamate 201, and histidine 243 each coordinate Zn(2+).

Belongs to the KduI family. It depends on Zn(2+) as a cofactor.

It carries out the reaction 5-dehydro-4-deoxy-D-glucuronate = 3-deoxy-D-glycero-2,5-hexodiulosonate. Its pathway is glycan metabolism; pectin degradation; 2-dehydro-3-deoxy-D-gluconate from pectin: step 4/5. Functionally, catalyzes the isomerization of 5-dehydro-4-deoxy-D-glucuronate to 3-deoxy-D-glycero-2,5-hexodiulosonate. In Enterococcus faecalis (strain ATCC 700802 / V583), this protein is 4-deoxy-L-threo-5-hexosulose-uronate ketol-isomerase 2 (kduI2).